The following is a 123-amino-acid chain: MGIKYSNKINKIRTFALSLVFIGLLIAYLGVFFRENIIIMTTFMMLGFLAVLASTFVYFWIGMLSTKTVQIVCPSCNKPTKMLGRVDVCMHCNQPLTLDSNLEGKEFDEKYNKKTIKHTNIYK.

2 helical membrane-spanning segments follow: residues 12-32 and 43-63; these read IRTF…LGVF and FMML…WIGM.

It belongs to the UPF0295 family.

It is found in the cell membrane. The protein is UPF0295 protein Bcer98_0460 of Bacillus cytotoxicus (strain DSM 22905 / CIP 110041 / 391-98 / NVH 391-98).